The primary structure comprises 81 residues: Three-finger toxin 3FTx-Oxy6 (81 aa).

Positions 1-21 (MKTLLLSLVVMTIVYLDLGYT) are cleaved as a signal peptide. 4 cysteine pairs are disulfide-bonded: Cys-24-Cys-43, Cys-36-Cys-61, Cys-65-Cys-73, and Cys-74-Cys-79.

Belongs to the three-finger toxin family. Short-chain subfamily. In terms of tissue distribution, expressed by the venom gland.

The protein localises to the secreted. The sequence is that of Three-finger toxin 3FTx-Oxy6 from Oxyuranus microlepidotus (Inland taipan).